The primary structure comprises 615 residues: 1-deoxy-D-xylulose-5-phosphate synthase (615 aa).

Thiamine diphosphate-binding positions include histidine 76 and 117-119; that span reads GHS. Mg(2+) is bound at residue aspartate 148. Thiamine diphosphate-binding positions include 149–150, asparagine 177, tyrosine 284, and glutamate 365; that span reads GA. Asparagine 177 is a binding site for Mg(2+).

Belongs to the transketolase family. DXPS subfamily. In terms of assembly, homodimer. Requires Mg(2+) as cofactor. It depends on thiamine diphosphate as a cofactor.

It catalyses the reaction D-glyceraldehyde 3-phosphate + pyruvate + H(+) = 1-deoxy-D-xylulose 5-phosphate + CO2. Its pathway is metabolic intermediate biosynthesis; 1-deoxy-D-xylulose 5-phosphate biosynthesis; 1-deoxy-D-xylulose 5-phosphate from D-glyceraldehyde 3-phosphate and pyruvate: step 1/1. Its function is as follows. Catalyzes the acyloin condensation reaction between C atoms 2 and 3 of pyruvate and glyceraldehyde 3-phosphate to yield 1-deoxy-D-xylulose-5-phosphate (DXP). This is 1-deoxy-D-xylulose-5-phosphate synthase from Francisella tularensis subsp. mediasiatica (strain FSC147).